The sequence spans 479 residues: Aspartyl/glutamyl-tRNA(Asn/Gln) amidotransferase subunit B (479 aa).

Belongs to the GatB/GatE family. GatB subfamily. Heterotrimer of A, B and C subunits.

The enzyme catalyses L-glutamyl-tRNA(Gln) + L-glutamine + ATP + H2O = L-glutaminyl-tRNA(Gln) + L-glutamate + ADP + phosphate + H(+). It carries out the reaction L-aspartyl-tRNA(Asn) + L-glutamine + ATP + H2O = L-asparaginyl-tRNA(Asn) + L-glutamate + ADP + phosphate + 2 H(+). Allows the formation of correctly charged Asn-tRNA(Asn) or Gln-tRNA(Gln) through the transamidation of misacylated Asp-tRNA(Asn) or Glu-tRNA(Gln) in organisms which lack either or both of asparaginyl-tRNA or glutaminyl-tRNA synthetases. The reaction takes place in the presence of glutamine and ATP through an activated phospho-Asp-tRNA(Asn) or phospho-Glu-tRNA(Gln). This is Aspartyl/glutamyl-tRNA(Asn/Gln) amidotransferase subunit B from Geotalea uraniireducens (strain Rf4) (Geobacter uraniireducens).